Here is a 130-residue protein sequence, read N- to C-terminus: Large ribosomal subunit protein bL12 (130 aa).

This sequence belongs to the bacterial ribosomal protein bL12 family. Homodimer. Part of the ribosomal stalk of the 50S ribosomal subunit. Forms a multimeric L10(L12)X complex, where L10 forms an elongated spine to which 2 to 4 L12 dimers bind in a sequential fashion. Binds GTP-bound translation factors.

In terms of biological role, forms part of the ribosomal stalk which helps the ribosome interact with GTP-bound translation factors. Is thus essential for accurate translation. The polypeptide is Large ribosomal subunit protein bL12 (Nostoc punctiforme (strain ATCC 29133 / PCC 73102)).